We begin with the raw amino-acid sequence, 371 residues long: Methylthioribose-1-phosphate isomerase (371 aa).

Residues 53–55 (RGA), arginine 90, and glutamine 203 each bind substrate. Residue aspartate 243 is the Proton donor of the active site. 253–254 (NK) is a binding site for substrate.

This sequence belongs to the eIF-2B alpha/beta/delta subunits family. MtnA subfamily.

It catalyses the reaction 5-(methylsulfanyl)-alpha-D-ribose 1-phosphate = 5-(methylsulfanyl)-D-ribulose 1-phosphate. The catalysed reaction is 5-deoxy-alpha-D-ribose 1-phosphate = 5-deoxy-D-ribulose 1-phosphate. Its pathway is amino-acid biosynthesis; L-methionine biosynthesis via salvage pathway; L-methionine from S-methyl-5-thio-alpha-D-ribose 1-phosphate: step 1/6. In terms of biological role, catalyzes the interconversion of methylthioribose-1-phosphate (MTR-1-P) into methylthioribulose-1-phosphate (MTRu-1-P). Also catalyzes the interconversion of 5-deoxyribose 1-phosphate and 5-deoxyribulose 1-phosphate. Part of a bifunctional DHAP-shunt salvage pathway for SAM by-products. The protein is Methylthioribose-1-phosphate isomerase of Escherichia coli O45:K1 (strain S88 / ExPEC).